A 499-amino-acid chain; its full sequence is Pentatricopeptide repeat-containing protein PPR5, chloroplastic (499 aa).

The segment covering 1–12 (MLACPSTSSPWP) has biased composition (low complexity). The tract at residues 1 to 28 (MLACPSTSSPWPQRQPPSPCPGGGGGAT) is disordered. A chloroplast-targeting transit peptide spans 1 to 45 (MLACPSTSSPWPQRQPPSPCPGGGGGATRHVALAARSKRRGAGPA). PPR repeat units follow at residues 123–157 (DNGI…GCKP), 158–193 (DTSV…KCIE), 198–232 (TIVT…VVSP), 233–267 (DVYT…QCRP), 268–302 (DVIT…KERP), 303–337 (THPT…GFKP), 338–372 (NYVT…QTKV), 373–407 (HLSS…CVVP), and 408–442 (NGST…GIVP). Positions 458–499 (DRKPRTSPGINSASKPSTDSAGDSETATSDKPEVSVWHVAAT) are disordered. Over residues 465 to 484 (PGINSASKPSTDSAGDSETA) the composition is skewed to polar residues.

This sequence belongs to the PPR family. P subfamily.

It localises to the plastid. The protein localises to the chloroplast. Functionally, involved in the biogenesis of the plastid translation machinery by promoting the splicing of group II introns in chloroplasts. Stabilizes the chloroplast trnG pre-RNA by directly binding to a group II intron, where it protects an endonuclease-sensitive site and stimulates splicing. Binds specific sites within group II intron trnG pre-RNA. Binds with high affinity to the 5'-UTR of the chloroplastic petA mRNA. This Zea mays (Maize) protein is Pentatricopeptide repeat-containing protein PPR5, chloroplastic.